A 515-amino-acid chain; its full sequence is Serine/threonine-protein phosphatase PP-Z (515 aa).

Residues 1 to 186 (MGQGSSKHAD…SSTDPDDPET (186 aa)) are disordered. The span at 17 to 30 (PSFSRSDTQGSIKS) shows a compositional bias: polar residues. Serine 18 bears the Phosphoserine mark. Basic and acidic residues predominate over residues 40–51 (KGKDSNHDRRTS). The segment covering 63-74 (ETPPSLPPPPSP) has biased composition (pro residues). Residues 91 to 109 (DSGNSSQSPTSPHPSNQPA) show a composition bias toward polar residues. Positions 126–143 (SSSSYAVSPTSPTSPTSS) are enriched in low complexity. Mn(2+) contacts are provided by aspartate 248, histidine 250, aspartate 276, and asparagine 308. The active-site Proton donor is the histidine 309. The Mn(2+) site is built by histidine 357 and histidine 432. Phosphoserine is present on residues serine 505 and serine 514.

The protein belongs to the PPP phosphatase family. PP-Z subfamily. It depends on Mn(2+) as a cofactor.

The protein resides in the cytoplasm. The catalysed reaction is O-phospho-L-seryl-[protein] + H2O = L-seryl-[protein] + phosphate. It catalyses the reaction O-phospho-L-threonyl-[protein] + H2O = L-threonyl-[protein] + phosphate. This Schizosaccharomyces pombe (strain 972 / ATCC 24843) (Fission yeast) protein is Serine/threonine-protein phosphatase PP-Z (pzh1).